Consider the following 286-residue polypeptide: Deaminated glutathione amidase (286 aa).

The CN hydrolase domain occupies 4–252 (ANVALLQLCS…VSALKVKIET (249 aa)). The active-site Proton acceptor is Glu42. Lys115 is a catalytic residue. Residue Cys157 is the Nucleophile of the active site.

Belongs to the carbon-nitrogen hydrolase superfamily. NIT1/NIT2 family.

The enzyme catalyses N-(4-oxoglutaryl)-L-cysteinylglycine + H2O = L-cysteinylglycine + 2-oxoglutarate. Hydrolyzes deaminated glutathione (dGSH, 2-oxoglutaramate) to alpha-ketoglutarate (alpha-KG) and cysteinylglycine (specific activity 6.50 umol/min/mg), has less activity against alpha-ketoglutaramate (a-KGM, specific activity 0.20 umol/min/mg), very little activity on glutathione and none on L-glutamine. May function as a metabolite repair enzyme. This chain is Deaminated glutathione amidase, found in Yersinia enterocolitica.